The chain runs to 484 residues: MDLYGYVACALRLRYGVLDAFLNVYNPDELSAMDDTPFSLYLTRYDCTLETLRLFLKRGVDVNGVRGTRTSPLCTVLSNKELGKEAETLAMCLIDAGADVNARGADGRYPLLCLLENDRINTTSFVKYMIDRGTLVCVRGIDGCGPIQTYLRSKNVVLETLHVLVRAGASIHDMDKKYGFNILQCYMISHVRSSDVRILRFLAGQGVNSSQGFNATFMFDMLERKISYGVFNRKVLDFIFTQISVNQQDSLDFTPINYCVIHNDRRTFDYLLEKGANPNVVNFLGNSCLDLAVLNGNKYMTLRLLRKTITPDAYARALKVINYNIYSINSFGMREFVTRHRTMYKALIRSFIKDSDMEIYTYNHIYDFFKEFVDECIRERDAMKADVLDSVSMFDVIFGRVSRIRWKHVRVISKYVRGAYGDKVKKILRSLYTRRFKTNRLVHYITDLCGTSCLWTHLPVEVRYTIVDYLNDGEIHYLFMKLHA.

ANK repeat units follow at residues 33 to 64 (MDDT…DVNG), 68 to 102 (TRTS…DVNA), 106 to 138 (DGRY…LVCV), 142 to 173 (DGCG…SIHD), 178 to 211 (YGFN…NSSQ), 251 to 280 (LDFT…NPNV), and 284 to 313 (LGNS…TPDA).

The chain is Ankyrin repeat protein T5 from Rabbit fibroma virus (strain Kasza) (RFV).